The primary structure comprises 445 residues: Glucose-6-phosphate isomerase 2 (445 aa).

The active-site Proton donor is the glutamate 285. Residues histidine 306 and lysine 420 contribute to the active site.

Belongs to the GPI family. As to quaternary structure, homodimer.

Its subcellular location is the cytoplasm. The catalysed reaction is alpha-D-glucose 6-phosphate = beta-D-fructose 6-phosphate. The protein operates within carbohydrate biosynthesis; gluconeogenesis. Its pathway is carbohydrate degradation; glycolysis; D-glyceraldehyde 3-phosphate and glycerone phosphate from D-glucose: step 2/4. Functionally, catalyzes the reversible isomerization of glucose-6-phosphate to fructose-6-phosphate. The polypeptide is Glucose-6-phosphate isomerase 2 (Geobacillus stearothermophilus (Bacillus stearothermophilus)).